We begin with the raw amino-acid sequence, 161 residues long: Putative pre-16S rRNA nuclease (161 aa).

Belongs to the YqgF nuclease family.

It is found in the cytoplasm. In terms of biological role, could be a nuclease involved in processing of the 5'-end of pre-16S rRNA. This chain is Putative pre-16S rRNA nuclease, found in Bartonella bacilliformis (strain ATCC 35685 / KC583 / Herrer 020/F12,63).